A 54-amino-acid chain; its full sequence is Large ribosomal subunit protein bL33 (54 aa).

The protein belongs to the bacterial ribosomal protein bL33 family.

The chain is Large ribosomal subunit protein bL33 from Stenotrophomonas maltophilia (strain K279a).